A 450-amino-acid chain; its full sequence is Membrane-bound lytic murein transglycosylase F 2 (450 aa).

The signal sequence occupies residues 1–20; that stretch reads MRTWIAILAVVLVLLLNACT. The tract at residues 21 to 261 is non-LT domain; sequence DGPEDGPRLE…AMENRYYTYV (241 aa). Residues 262–450 are LT domain; it reads GEFDFVDLRA…YRDVIRQAFE (189 aa). Residue E308 is part of the active site.

In the N-terminal section; belongs to the bacterial solute-binding protein 3 family. The protein in the C-terminal section; belongs to the transglycosylase Slt family.

It localises to the cell outer membrane. It catalyses the reaction Exolytic cleavage of the (1-&gt;4)-beta-glycosidic linkage between N-acetylmuramic acid (MurNAc) and N-acetylglucosamine (GlcNAc) residues in peptidoglycan, from either the reducing or the non-reducing ends of the peptidoglycan chains, with concomitant formation of a 1,6-anhydrobond in the MurNAc residue.. In terms of biological role, murein-degrading enzyme that degrades murein glycan strands and insoluble, high-molecular weight murein sacculi, with the concomitant formation of a 1,6-anhydromuramoyl product. Lytic transglycosylases (LTs) play an integral role in the metabolism of the peptidoglycan (PG) sacculus. Their lytic action creates space within the PG sacculus to allow for its expansion as well as for the insertion of various structures such as secretion systems and flagella. The sequence is that of Membrane-bound lytic murein transglycosylase F 2 from Alkalilimnicola ehrlichii (strain ATCC BAA-1101 / DSM 17681 / MLHE-1).